The primary structure comprises 489 residues: Betaine aldehyde dehydrogenase (489 aa).

K(+)-binding residues include Thr-26 and Asp-93. 150 to 152 (GAW) serves as a coordination point for NAD(+). Lys-162 acts as the Charge relay system in catalysis. Position 176–179 (176–179 (KPSE)) interacts with NAD(+). Val-180 is a binding site for K(+). 229 to 232 (GVET) contributes to the NAD(+) binding site. K(+) is bound at residue Leu-245. The active-site Proton acceptor is the Glu-251. Residues Gly-253, Cys-285, and Glu-386 each contribute to the NAD(+) site. The Nucleophile role is filled by Cys-285. Cys-285 is subject to Cysteine sulfenic acid (-SOH). K(+)-binding residues include Lys-456 and Gly-459. Glu-463 acts as the Charge relay system in catalysis.

Belongs to the aldehyde dehydrogenase family. In terms of assembly, dimer of dimers. K(+) serves as cofactor.

It carries out the reaction betaine aldehyde + NAD(+) + H2O = glycine betaine + NADH + 2 H(+). Its pathway is amine and polyamine biosynthesis; betaine biosynthesis via choline pathway; betaine from betaine aldehyde: step 1/1. In terms of biological role, involved in the biosynthesis of the osmoprotectant glycine betaine. Catalyzes the irreversible oxidation of betaine aldehyde to the corresponding acid. The polypeptide is Betaine aldehyde dehydrogenase (Burkholderia mallei (strain SAVP1)).